The sequence spans 535 residues: uncharacterized protein (535 aa).

Residues 17–37 (IVLLCMIGFFCTTFMRIHFAL) traverse the membrane as a helical segment. N-linked (GlcNAc...) asparagine glycosylation is found at N44 and N61. 6 helical membrane passes run 107 to 127 (LIFS…MFFI), 144 to 164 (ILVT…SVFL), 167 to 187 (IGMG…IGNW), 199 to 219 (IFTL…AAVC), 225 to 245 (WPAT…LWFF), and 292 to 312 (AFLG…LFQI). N-linked (GlcNAc...) asparagine glycosylation occurs at N329. 5 helical membrane-spanning segments follow: residues 331–351 (TFTA…GIGI), 368–388 (VSHG…AFFV), 395–415 (TGLI…SGFY), 429–451 (MSAI…MSMF), and 463–483 (IFIG…LFGS).

Belongs to the major facilitator superfamily. Sodium/anion cotransporter family.

It is found in the membrane. This is an uncharacterized protein from Caenorhabditis elegans.